The sequence spans 312 residues: Malate dehydrogenase (312 aa).

Residues 7-13 (GAAGGIG) and Asp34 contribute to the NAD(+) site. Substrate-binding residues include Arg81 and Arg87. NAD(+) contacts are provided by residues Asn94 and 117 to 119 (ITN). Substrate contacts are provided by Asn119 and Arg153. Residue His177 is the Proton acceptor of the active site. An NAD(+)-binding site is contributed by Met227.

It belongs to the LDH/MDH superfamily. MDH type 1 family. As to quaternary structure, homodimer.

It catalyses the reaction (S)-malate + NAD(+) = oxaloacetate + NADH + H(+). Catalyzes the reversible oxidation of malate to oxaloacetate. This Escherichia coli O7:K1 (strain IAI39 / ExPEC) protein is Malate dehydrogenase.